Reading from the N-terminus, the 480-residue chain is Coronin-2B (480 aa).

5 WD repeats span residues 85–125, 135–177, 179–217, 220–263, and 265–308; these read GHQG…LKRN, GHSR…KMID, HRDV…VLQE, CKTH…MPVT, and EEID…PYLT. Positions 436–475 form a coiled coil; it reads NELLRMFFRQQEEIRRLKEQLSQRDLLVRQLELELKNLRN.

Belongs to the WD repeat coronin family.

The protein resides in the cytoplasm. It localises to the cytoskeleton. In terms of biological role, may play a role in the reorganization of neuronal actin structure. The protein is Coronin-2B (coro2b) of Xenopus tropicalis (Western clawed frog).